We begin with the raw amino-acid sequence, 535 residues long: CTP synthase (535 aa).

Residues 1-267 (MTKYIFVTGG…DKLVCEHMKL (267 aa)) are amidoligase domain. Ser13 contacts CTP. Ser13 is a UTP binding site. Residue 14–19 (SLGKGI) coordinates ATP. Tyr54 is a binding site for L-glutamine. Asp71 lines the ATP pocket. Positions 71 and 141 each coordinate Mg(2+). Residues 148-150 (DIE), 188-193 (KTKPTQ), and Lys224 each bind CTP. UTP contacts are provided by residues 188–193 (KTKPTQ) and Lys224. The Glutamine amidotransferase type-1 domain maps to 292-534 (TIGLVGKYVE…VGASLQASES (243 aa)). Gly354 is an L-glutamine binding site. The active-site Nucleophile; for glutamine hydrolysis is Cys381. Residues 382–385 (LGMQ), Glu405, and Arg462 each bind L-glutamine. Catalysis depends on residues His507 and Glu509.

Belongs to the CTP synthase family. As to quaternary structure, homotetramer.

It catalyses the reaction UTP + L-glutamine + ATP + H2O = CTP + L-glutamate + ADP + phosphate + 2 H(+). It carries out the reaction L-glutamine + H2O = L-glutamate + NH4(+). The catalysed reaction is UTP + NH4(+) + ATP = CTP + ADP + phosphate + 2 H(+). It participates in pyrimidine metabolism; CTP biosynthesis via de novo pathway; CTP from UDP: step 2/2. Allosterically activated by GTP, when glutamine is the substrate; GTP has no effect on the reaction when ammonia is the substrate. The allosteric effector GTP functions by stabilizing the protein conformation that binds the tetrahedral intermediate(s) formed during glutamine hydrolysis. Inhibited by the product CTP, via allosteric rather than competitive inhibition. Catalyzes the ATP-dependent amination of UTP to CTP with either L-glutamine or ammonia as the source of nitrogen. Regulates intracellular CTP levels through interactions with the four ribonucleotide triphosphates. This chain is CTP synthase, found in Bacillus pumilus (strain SAFR-032).